The chain runs to 120 residues: Transcription elongation factor SPT4 (120 aa).

The tract at residues 1–39 is interaction with spt-5; that stretch reads MSASVPADLRNLRACLLCSLVKSVESFQKEGCENCEDVL. A C4-type zinc finger spans residues 15–35; that stretch reads CLLCSLVKSVESFQKEGCENC.

This sequence belongs to the SPT4 family. In terms of assembly, interacts with spt-5 to form DSIF. DSIF interacts with RNA polymerase II and with the positive transcription elongation factor b complex (P-TEFb complex), which is composed of cdk-9 and cyclin-T (cit-1.1 or cit-1.2).

It is found in the nucleus. Its function is as follows. May function as a component of the DRB sensitivity-inducing factor complex (DSIF complex), which regulates transcription elongation by RNA polymerase II. DSIF may enhance transcriptional pausing at sites proximal to the promoter, which may in turn facilitate the assembly of an elongation competent RNA polymerase II complex. This is Transcription elongation factor SPT4 (spt-4) from Caenorhabditis elegans.